A 739-amino-acid polypeptide reads, in one-letter code: Exocyst complex component 3-like protein (739 aa).

Residues 1-370 (MDSAARDKTQ…DVSDLEPLLT (370 aa)) form a mediates interaction with EXOC2, EXOC4 and EXOC5 region.

Belongs to the SEC6 family. As to quaternary structure, interacts with EXOC2, EXOC4 and EXOC5; may be part of the exocyst.

It localises to the cytoplasmic vesicle. The protein resides in the secretory vesicle. Its function is as follows. As part of the exocyst, may play a role in regulated exocytosis of insulin granules. This is Exocyst complex component 3-like protein (EXOC3L1) from Bos taurus (Bovine).